The primary structure comprises 110 residues: MEAIAKHNFARISPQKARLVADQIRGKSVDQALELLTFSNKKAAELVKKVLESAIANAEHNEGADIDDLRVAKIFVDEGPVMKRIMPRAKGRADRILKRSSHITVVVADR.

Belongs to the universal ribosomal protein uL22 family. As to quaternary structure, part of the 50S ribosomal subunit.

In terms of biological role, this protein binds specifically to 23S rRNA; its binding is stimulated by other ribosomal proteins, e.g. L4, L17, and L20. It is important during the early stages of 50S assembly. It makes multiple contacts with different domains of the 23S rRNA in the assembled 50S subunit and ribosome. The globular domain of the protein is located near the polypeptide exit tunnel on the outside of the subunit, while an extended beta-hairpin is found that lines the wall of the exit tunnel in the center of the 70S ribosome. The protein is Large ribosomal subunit protein uL22 of Vibrio cholerae serotype O1 (strain ATCC 39541 / Classical Ogawa 395 / O395).